Consider the following 828-residue polypeptide: ADP-ribosylation factor GTPase-activating protein AGD1 (828 aa).

Residues 1–225 (MHFAKLDDSP…INQVLAYAHQ (225 aa)) enclose the BAR domain. Positions 225-255 (QSRECANYEMASLNERMQEYQRQVDRETRNS) form a coiled coil. A disordered region spans residues 247-268 (QVDRETRNSCVSPTGDGMRHNS). One can recognise a PH domain in the interval 288-425 (QTIRQGYLSK…WIEKITGVIA (138 aa)). S441 carries the post-translational modification Phosphoserine. The region spanning 498–643 (EKPIDVLTRV…IFVRKAIDSQ (146 aa)) is the Arf-GAP domain. The C4-type zinc finger occupies 513 to 536 (CADCGAPEPDWASLNLGVLICIEC). The segment covering 590–600 (TSSASRSSGTP) has biased composition (low complexity). The segment at 590 to 611 (TSSASRSSGTPKSDRPRKLLVR) is disordered. ANK repeat units lie at residues 735–764 (NDCS…KINA) and 768–797 (KGRT…DPNA).

As to expression, expressed in roots, but not in hypocotyls or cotyledons. Low levels detected in leaf and shoot apical meristems and in siliques.

Its subcellular location is the endosome. Functionally, probable GTPase-activating protein. Regulator of membrane trafficking. Required for maintaining a straight growth of root hairs. In Arabidopsis thaliana (Mouse-ear cress), this protein is ADP-ribosylation factor GTPase-activating protein AGD1 (AGD1).